Here is a 657-residue protein sequence, read N- to C-terminus: UvrABC system protein B (657 aa).

The Helicase ATP-binding domain maps to 25–182; the sequence is KSIKKGNEFQ…KKLIEIQYER (158 aa). 38–45 lines the ATP pocket; the sequence is GVTGSGKT. The Beta-hairpin signature appears at 91–114; that stretch reads YYDYYQPEAYVPQTDTFIEKDASI. In terms of domain architecture, Helicase C-terminal spans 429–595; that stretch reads QIDDLYTEIQ…TINKEVRDLI (167 aa). In terms of domain architecture, UVR spans 621–656; that stretch reads KKLIKEYTEEMMLAAKNLQFERAAQLRDEIEELKGK.

Belongs to the UvrB family. Forms a heterotetramer with UvrA during the search for lesions. Interacts with UvrC in an incision complex.

The protein localises to the cytoplasm. Its function is as follows. The UvrABC repair system catalyzes the recognition and processing of DNA lesions. A damage recognition complex composed of 2 UvrA and 2 UvrB subunits scans DNA for abnormalities. Upon binding of the UvrA(2)B(2) complex to a putative damaged site, the DNA wraps around one UvrB monomer. DNA wrap is dependent on ATP binding by UvrB and probably causes local melting of the DNA helix, facilitating insertion of UvrB beta-hairpin between the DNA strands. Then UvrB probes one DNA strand for the presence of a lesion. If a lesion is found the UvrA subunits dissociate and the UvrB-DNA preincision complex is formed. This complex is subsequently bound by UvrC and the second UvrB is released. If no lesion is found, the DNA wraps around the other UvrB subunit that will check the other stand for damage. The chain is UvrABC system protein B from Clostridium botulinum (strain Alaska E43 / Type E3).